The primary structure comprises 190 residues: Elongation factor P 2 (190 aa).

This sequence belongs to the elongation factor P family.

It is found in the cytoplasm. The protein operates within protein biosynthesis; polypeptide chain elongation. Involved in peptide bond synthesis. Stimulates efficient translation and peptide-bond synthesis on native or reconstituted 70S ribosomes in vitro. Probably functions indirectly by altering the affinity of the ribosome for aminoacyl-tRNA, thus increasing their reactivity as acceptors for peptidyl transferase. This Chlamydia caviae (strain ATCC VR-813 / DSM 19441 / 03DC25 / GPIC) (Chlamydophila caviae) protein is Elongation factor P 2 (efp2).